Consider the following 466-residue polypeptide: Ribulose bisphosphate carboxylase large chain (466 aa).

At lysine 4 the chain carries N6,N6,N6-trimethyllysine. Substrate contacts are provided by asparagine 113 and threonine 163. Lysine 165 functions as the Proton acceptor in the catalytic mechanism. Lysine 167 contacts substrate. Residues lysine 191, aspartate 193, and glutamate 194 each coordinate Mg(2+). Lysine 191 bears the N6-carboxylysine mark. Residue histidine 284 is the Proton acceptor of the active site. Residues arginine 285, histidine 317, and serine 369 each coordinate substrate.

This sequence belongs to the RuBisCO large chain family. Type I subfamily. As to quaternary structure, heterohexadecamer of 8 large chains and 8 small chains; disulfide-linked. The disulfide link is formed within the large subunit homodimers. Mg(2+) is required as a cofactor. In terms of processing, the disulfide bond which can form in the large chain dimeric partners within the hexadecamer appears to be associated with oxidative stress and protein turnover.

Its subcellular location is the plastid. The protein resides in the chloroplast. It catalyses the reaction 2 (2R)-3-phosphoglycerate + 2 H(+) = D-ribulose 1,5-bisphosphate + CO2 + H2O. The enzyme catalyses D-ribulose 1,5-bisphosphate + O2 = 2-phosphoglycolate + (2R)-3-phosphoglycerate + 2 H(+). Functionally, ruBisCO catalyzes two reactions: the carboxylation of D-ribulose 1,5-bisphosphate, the primary event in carbon dioxide fixation, as well as the oxidative fragmentation of the pentose substrate in the photorespiration process. Both reactions occur simultaneously and in competition at the same active site. This chain is Ribulose bisphosphate carboxylase large chain, found in Barleria prionitis (Porcupine flower).